The sequence spans 276 residues: Undecaprenyl-diphosphatase 1 (276 aa).

The next 6 membrane-spanning stretches (helical) occupy residues 43 to 63 (RAMAFNIIIQLGAILAVVWEF), 85 to 105 (ANLLIAFLPAVVLGVIFADLI), 109 to 129 (LFNPITVAAALVVGGIVMLWA), 184 to 204 (ATEFSFFLAMPTMVGAAVYSG), 214 to 234 (ADFPVFAIGFVTAFIFAMIAV), and 254 to 274 (IVFGLVILATWQFGWVDWTAA).

This sequence belongs to the UppP family.

Its subcellular location is the cell inner membrane. The catalysed reaction is di-trans,octa-cis-undecaprenyl diphosphate + H2O = di-trans,octa-cis-undecaprenyl phosphate + phosphate + H(+). Functionally, catalyzes the dephosphorylation of undecaprenyl diphosphate (UPP). Confers resistance to bacitracin. This chain is Undecaprenyl-diphosphatase 1, found in Pseudomonas fluorescens (strain Pf0-1).